The sequence spans 301 residues: Acetyl-coenzyme A carboxylase carboxyl transferase subunit beta (301 aa).

Residues 25–294 form the CoA carboxyltransferase N-terminal domain; the sequence is LWIKCPETGE…SAANDMNGGA (270 aa).

This sequence belongs to the AccD/PCCB family. In terms of assembly, acetyl-CoA carboxylase is a heterohexamer composed of biotin carboxyl carrier protein (AccB), biotin carboxylase (AccC) and two subunits each of ACCase subunit alpha (AccA) and ACCase subunit beta (AccD).

The protein localises to the cytoplasm. The catalysed reaction is N(6)-carboxybiotinyl-L-lysyl-[protein] + acetyl-CoA = N(6)-biotinyl-L-lysyl-[protein] + malonyl-CoA. It participates in lipid metabolism; malonyl-CoA biosynthesis; malonyl-CoA from acetyl-CoA: step 1/1. Component of the acetyl coenzyme A carboxylase (ACC) complex. Biotin carboxylase (BC) catalyzes the carboxylation of biotin on its carrier protein (BCCP) and then the CO(2) group is transferred by the transcarboxylase to acetyl-CoA to form malonyl-CoA. The chain is Acetyl-coenzyme A carboxylase carboxyl transferase subunit beta from Rhizobium etli (strain CIAT 652).